The following is a 515-amino-acid chain: Glucose-6-phosphate 1-dehydrogenase (515 aa).

Position 2 is an N-acetylalanine (alanine 2). A Phosphoserine modification is found at serine 8. Threonine 10 bears the Phosphothreonine mark. NADP(+)-binding positions include 38-45 (GASGDLAK) and arginine 72. N6-acetyllysine is present on lysine 89. NADP(+)-binding residues include tyrosine 147 and lysine 171. D-glucose 6-phosphate-binding positions include lysine 171, 201–205 (HYLGK), glutamate 239, and aspartate 258. Lysine 171 bears the N6-(2-hydroxyisobutyryl)lysine; alternate mark. Lysine 171 is subject to N6-acetyllysine; alternate. Residue histidine 263 is the Proton acceptor of the active site. Arginine 357 lines the NADP(+) pocket. The D-glucose 6-phosphate site is built by lysine 360 and arginine 365. NADP(+) contacts are provided by lysine 366, arginine 370, and arginine 393. D-glucose 6-phosphate is bound at residue glutamine 395. NADP(+) is bound by residues 401–403 (YTK) and 421–423 (DLT). Lysine 403 bears the N6-acetyllysine mark. Residue lysine 432 is modified to N6-acetyllysine. Arginine 487 lines the NADP(+) pocket. Lysine 497 is subject to N6-acetyllysine. Residues tyrosine 503 and tryptophan 509 each contribute to the NADP(+) site. Tyrosine 503 is subject to Phosphotyrosine.

The protein belongs to the glucose-6-phosphate dehydrogenase family. Homotetramer; dimer of dimers. Interacts with SIRT2; the interaction is enhanced by H(2)O(2) treatment. Forms a ternary complex with ALDOB and TP53; this interaction is direct. ALDOB stabilizes the complex inhibiting G6PD activity and keeping oxidative pentose phosphate metabolism in check. Post-translationally, acetylated by ELP3 at Lys-403; acetylation inhibits its homodimerization and enzyme activity. Deacetylated by SIRT2 at Lys-403; deacetylation stimulates its enzyme activity.

It localises to the cytoplasm. It is found in the cytosol. The protein localises to the membrane. The catalysed reaction is D-glucose 6-phosphate + NADP(+) = 6-phospho-D-glucono-1,5-lactone + NADPH + H(+). The protein operates within carbohydrate degradation; pentose phosphate pathway; D-ribulose 5-phosphate from D-glucose 6-phosphate (oxidative stage): step 1/3. Functionally, cytosolic glucose-6-phosphate dehydrogenase that catalyzes the first and rate-limiting step of the oxidative branch within the pentose phosphate pathway/shunt, an alternative route to glycolysis for the dissimilation of carbohydrates and a major source of reducing power and metabolic intermediates for fatty acid and nucleic acid biosynthetic processes. In Cricetulus griseus (Chinese hamster), this protein is Glucose-6-phosphate 1-dehydrogenase (G6PD).